Reading from the N-terminus, the 466-residue chain is ATP synthase subunit beta (466 aa).

An ATP-binding site is contributed by 156 to 163; that stretch reads GGAGVGKT.

Belongs to the ATPase alpha/beta chains family. In terms of assembly, F-type ATPases have 2 components, CF(1) - the catalytic core - and CF(0) - the membrane proton channel. CF(1) has five subunits: alpha(3), beta(3), gamma(1), delta(1), epsilon(1). CF(0) has three main subunits: a(1), b(2) and c(9-12). The alpha and beta chains form an alternating ring which encloses part of the gamma chain. CF(1) is attached to CF(0) by a central stalk formed by the gamma and epsilon chains, while a peripheral stalk is formed by the delta and b chains.

It localises to the cell membrane. The enzyme catalyses ATP + H2O + 4 H(+)(in) = ADP + phosphate + 5 H(+)(out). Functionally, produces ATP from ADP in the presence of a proton gradient across the membrane. The catalytic sites are hosted primarily by the beta subunits. The protein is ATP synthase subunit beta of Polynucleobacter asymbioticus (strain DSM 18221 / CIP 109841 / QLW-P1DMWA-1) (Polynucleobacter necessarius subsp. asymbioticus).